We begin with the raw amino-acid sequence, 130 residues long: Histone H2A type 1 (130 aa).

Residues 1 to 22 form a disordered region; it reads MSGRGKQGGKTRAKAKTRSSRA. Serine 2 carries the post-translational modification N-acetylserine. The residue at position 2 (serine 2) is a Phosphoserine. Lysine 6 carries the N6-(2-hydroxyisobutyryl)lysine modification. Lysine 6 is subject to N6-acetyllysine. Residues 7–19 are compositionally biased toward basic residues; the sequence is QGGKTRAKAKTRS. At lysine 10 the chain carries N6-(2-hydroxyisobutyryl)lysine; alternate. An N6-lactoyllysine; alternate modification is found at lysine 10. At lysine 10 the chain carries N6-succinyllysine. Residues lysine 14 and lysine 16 each participate in a glycyl lysine isopeptide (Lys-Gly) (interchain with G-Cter in ubiquitin) cross-link. Lysine 37 carries the N6-(2-hydroxyisobutyryl)lysine; alternate modification. An N6-(2-hydroxyisobutyryl)lysine mark is found at lysine 75 and lysine 76. An N6-(2-hydroxyisobutyryl)lysine; alternate modification is found at lysine 96. Lysine 96 bears the N6-succinyllysine mark. At lysine 96 the chain carries N6-glutaryllysine; alternate. An N5-methylglutamine modification is found at glutamine 105. The residue at position 119 (lysine 119) is an N6-(2-hydroxyisobutyryl)lysine; alternate. Residue lysine 119 is modified to N6-glutaryllysine; alternate. Lysine 120 participates in a covalent cross-link: Glycyl lysine isopeptide (Lys-Gly) (interchain with G-Cter in ubiquitin).

Belongs to the histone H2A family. In terms of assembly, the nucleosome is a histone octamer containing two molecules each of H2A, H2B, H3 and H4 assembled in one H3-H4 heterotetramer and two H2A-H2B heterodimers. The octamer wraps approximately 147 bp of DNA. Post-translationally, monoubiquitination of Lys-120 (H2AK119Ub) gives a specific tag for epigenetic transcriptional repression. Following DNA double-strand breaks (DSBs), it is ubiquitinated through 'Lys-63' linkage of ubiquitin moieties, leading to the recruitment of repair proteins to sites of DNA damage. H2AK119Ub and ionizing radiation-induced 'Lys-63'-linked ubiquitination are distinct events. Phosphorylation on Ser-2 is enhanced during mitosis. Phosphorylation on Ser-2 directly represses transcription. In terms of processing, glutamine methylation at Gln-105 (H2AQ104me) by FBL is specifically dedicated to polymerase I. It is present at 35S ribosomal DNA locus and impairs binding of the FACT complex.

The protein localises to the nucleus. It localises to the chromosome. In terms of biological role, core component of nucleosome. Nucleosomes wrap and compact DNA into chromatin, limiting DNA accessibility to the cellular machineries which require DNA as a template. Histones thereby play a central role in transcription regulation, DNA repair, DNA replication and chromosomal stability. DNA accessibility is regulated via a complex set of post-translational modifications of histones, also called histone code, and nucleosome remodeling. The sequence is that of Histone H2A type 1 from Xenopus laevis (African clawed frog).